The sequence spans 167 residues: Probable chorismate pyruvate-lyase (167 aa).

3 residues coordinate substrate: Arg-71, Ile-110, and Glu-150.

Belongs to the UbiC family.

It is found in the cytoplasm. It catalyses the reaction chorismate = 4-hydroxybenzoate + pyruvate. It participates in cofactor biosynthesis; ubiquinone biosynthesis. In terms of biological role, removes the pyruvyl group from chorismate, with concomitant aromatization of the ring, to provide 4-hydroxybenzoate (4HB) for the ubiquinone pathway. The chain is Probable chorismate pyruvate-lyase from Acinetobacter baylyi (strain ATCC 33305 / BD413 / ADP1).